A 295-amino-acid chain; its full sequence is Bifunctional protein FolD (295 aa).

Residues 166 to 168 (GRS), serine 191, and isoleucine 232 each bind NADP(+).

It belongs to the tetrahydrofolate dehydrogenase/cyclohydrolase family. As to quaternary structure, homodimer.

It carries out the reaction (6R)-5,10-methylene-5,6,7,8-tetrahydrofolate + NADP(+) = (6R)-5,10-methenyltetrahydrofolate + NADPH. The enzyme catalyses (6R)-5,10-methenyltetrahydrofolate + H2O = (6R)-10-formyltetrahydrofolate + H(+). The protein operates within one-carbon metabolism; tetrahydrofolate interconversion. Its function is as follows. Catalyzes the oxidation of 5,10-methylenetetrahydrofolate to 5,10-methenyltetrahydrofolate and then the hydrolysis of 5,10-methenyltetrahydrofolate to 10-formyltetrahydrofolate. This Rhodopseudomonas palustris (strain ATCC BAA-98 / CGA009) protein is Bifunctional protein FolD.